We begin with the raw amino-acid sequence, 331 residues long: Anthranilate phosphoribosyltransferase (331 aa).

Residues G81, 84–85 (GD), S89, 91–94 (NCST), 109–117 (KHGNRAVSS), and S121 each bind 5-phospho-alpha-D-ribose 1-diphosphate. Residue G81 participates in anthranilate binding. Residue S93 participates in Mg(2+) binding. N112 is a binding site for anthranilate. R167 is an anthranilate binding site. Residues D226 and E227 each contribute to the Mg(2+) site.

This sequence belongs to the anthranilate phosphoribosyltransferase family. Homodimer. Requires Mg(2+) as cofactor.

It carries out the reaction N-(5-phospho-beta-D-ribosyl)anthranilate + diphosphate = 5-phospho-alpha-D-ribose 1-diphosphate + anthranilate. It functions in the pathway amino-acid biosynthesis; L-tryptophan biosynthesis; L-tryptophan from chorismate: step 2/5. Functionally, catalyzes the transfer of the phosphoribosyl group of 5-phosphorylribose-1-pyrophosphate (PRPP) to anthranilate to yield N-(5'-phosphoribosyl)-anthranilate (PRA). This chain is Anthranilate phosphoribosyltransferase, found in Oleidesulfovibrio alaskensis (strain ATCC BAA-1058 / DSM 17464 / G20) (Desulfovibrio alaskensis).